We begin with the raw amino-acid sequence, 306 residues long: Phosphatidylserine decarboxylase proenzyme (306 aa).

Active-site charge relay system; for autoendoproteolytic cleavage activity residues include Asp-98, His-155, and Ser-259. Ser-259 serves as the catalytic Schiff-base intermediate with substrate; via pyruvic acid; for decarboxylase activity. Ser-259 is modified (pyruvic acid (Ser); by autocatalysis).

This sequence belongs to the phosphatidylserine decarboxylase family. PSD-B subfamily. Prokaryotic type I sub-subfamily. In terms of assembly, heterodimer of a large membrane-associated beta subunit and a small pyruvoyl-containing alpha subunit. Requires pyruvate as cofactor. In terms of processing, is synthesized initially as an inactive proenzyme. Formation of the active enzyme involves a self-maturation process in which the active site pyruvoyl group is generated from an internal serine residue via an autocatalytic post-translational modification. Two non-identical subunits are generated from the proenzyme in this reaction, and the pyruvate is formed at the N-terminus of the alpha chain, which is derived from the carboxyl end of the proenzyme. The autoendoproteolytic cleavage occurs by a canonical serine protease mechanism, in which the side chain hydroxyl group of the serine supplies its oxygen atom to form the C-terminus of the beta chain, while the remainder of the serine residue undergoes an oxidative deamination to produce ammonia and the pyruvoyl prosthetic group on the alpha chain. During this reaction, the Ser that is part of the protease active site of the proenzyme becomes the pyruvoyl prosthetic group, which constitutes an essential element of the active site of the mature decarboxylase.

The protein localises to the cell membrane. The enzyme catalyses a 1,2-diacyl-sn-glycero-3-phospho-L-serine + H(+) = a 1,2-diacyl-sn-glycero-3-phosphoethanolamine + CO2. Its pathway is phospholipid metabolism; phosphatidylethanolamine biosynthesis; phosphatidylethanolamine from CDP-diacylglycerol: step 2/2. In terms of biological role, catalyzes the formation of phosphatidylethanolamine (PtdEtn) from phosphatidylserine (PtdSer). This chain is Phosphatidylserine decarboxylase proenzyme, found in Nitrosococcus oceani (strain ATCC 19707 / BCRC 17464 / JCM 30415 / NCIMB 11848 / C-107).